Here is a 272-residue protein sequence, read N- to C-terminus: 2-amino-3,7-dideoxy-D-threo-hept-6-ulosonate synthase (272 aa).

The Proton acceptor role is filled by D33. 1-deoxy-D-threo-hexo-2,5-diulose 6-phosphate is bound by residues 33-37 and 153-155; these read DHGVS and YPR. Y153 functions as the Proton donor in the catalytic mechanism. The active-site Schiff-base intermediate with substrate is the K184. 1-deoxy-D-threo-hexo-2,5-diulose 6-phosphate is bound by residues 209 to 210 and 237 to 238; these read GG and GR.

The protein belongs to the DeoC/FbaB aldolase family. ADHS subfamily. In terms of assembly, homodecamer.

The enzyme catalyses 1-deoxy-D-threo-hexo-2,5-diulose 6-phosphate + L-aspartate 4-semialdehyde = 2,3-dioxopropyl phosphate + 2-amino-2,3,7-trideoxy-D-lyxo-hept-6-ulosonate. Catalyzes a transaldol reaction between 6-deoxy-5-ketofructose 1-phosphate (DKFP) and L-aspartate semialdehyde (ASA) with an elimination of hydroxypyruvaldehyde phosphate to yield 2-amino-3,7-dideoxy-D-threo-hept-6-ulosonate (ADH). Plays a key role in an alternative pathway of the biosynthesis of 3-dehydroquinate (DHQ), which is involved in the canonical pathway for the biosynthesis of aromatic amino acids. This chain is 2-amino-3,7-dideoxy-D-threo-hept-6-ulosonate synthase, found in Methanococcus maripaludis (strain C7 / ATCC BAA-1331).